The sequence spans 159 residues: SsrA-binding protein (159 aa).

The tract at residues 134–159 (KEHDKRDTERDRDWSRDKERLMKHNA) is disordered.

The protein belongs to the SmpB family.

Its subcellular location is the cytoplasm. In terms of biological role, required for rescue of stalled ribosomes mediated by trans-translation. Binds to transfer-messenger RNA (tmRNA), required for stable association of tmRNA with ribosomes. tmRNA and SmpB together mimic tRNA shape, replacing the anticodon stem-loop with SmpB. tmRNA is encoded by the ssrA gene; the 2 termini fold to resemble tRNA(Ala) and it encodes a 'tag peptide', a short internal open reading frame. During trans-translation Ala-aminoacylated tmRNA acts like a tRNA, entering the A-site of stalled ribosomes, displacing the stalled mRNA. The ribosome then switches to translate the ORF on the tmRNA; the nascent peptide is terminated with the 'tag peptide' encoded by the tmRNA and targeted for degradation. The ribosome is freed to recommence translation, which seems to be the essential function of trans-translation. This chain is SsrA-binding protein, found in Marinomonas sp. (strain MWYL1).